The primary structure comprises 467 residues: ATP synthase subunit beta (467 aa).

Residue Gly-156–Thr-163 coordinates ATP.

This sequence belongs to the ATPase alpha/beta chains family. As to quaternary structure, F-type ATPases have 2 components, CF(1) - the catalytic core - and CF(0) - the membrane proton channel. CF(1) has five subunits: alpha(3), beta(3), gamma(1), delta(1), epsilon(1). CF(0) has three main subunits: a(1), b(2) and c(9-12). The alpha and beta chains form an alternating ring which encloses part of the gamma chain. CF(1) is attached to CF(0) by a central stalk formed by the gamma and epsilon chains, while a peripheral stalk is formed by the delta and b chains.

It localises to the cell inner membrane. It carries out the reaction ATP + H2O + 4 H(+)(in) = ADP + phosphate + 5 H(+)(out). In terms of biological role, produces ATP from ADP in the presence of a proton gradient across the membrane. The catalytic sites are hosted primarily by the beta subunits. This Cupriavidus taiwanensis (strain DSM 17343 / BCRC 17206 / CCUG 44338 / CIP 107171 / LMG 19424 / R1) (Ralstonia taiwanensis (strain LMG 19424)) protein is ATP synthase subunit beta.